The following is a 277-amino-acid chain: Shikimate dehydrogenase (NADP(+)) (277 aa).

Residues 17-19 (SRS) and Thr64 contribute to the shikimate site. The active-site Proton acceptor is the Lys68. Asn88 and Asp103 together coordinate shikimate. NADP(+) contacts are provided by residues 128 to 132 (GAGGS), 152 to 157 (NRTLDR), and Leu217. Tyr219 lines the shikimate pocket. Residue Gly240 coordinates NADP(+).

The protein belongs to the shikimate dehydrogenase family. In terms of assembly, homodimer.

The catalysed reaction is shikimate + NADP(+) = 3-dehydroshikimate + NADPH + H(+). The protein operates within metabolic intermediate biosynthesis; chorismate biosynthesis; chorismate from D-erythrose 4-phosphate and phosphoenolpyruvate: step 4/7. Involved in the biosynthesis of the chorismate, which leads to the biosynthesis of aromatic amino acids. Catalyzes the reversible NADPH linked reduction of 3-dehydroshikimate (DHSA) to yield shikimate (SA). This chain is Shikimate dehydrogenase (NADP(+)), found in Rhodopseudomonas palustris (strain BisB18).